A 142-amino-acid chain; its full sequence is Transcriptional regulator MraZ (142 aa).

SpoVT-AbrB domains follow at residues 5-51 (SSAL…PRPE) and 77-120 (AQDV…DAAS).

This sequence belongs to the MraZ family. Forms oligomers.

The protein resides in the cytoplasm. Its subcellular location is the nucleoid. The protein is Transcriptional regulator MraZ of Bordetella bronchiseptica (strain ATCC BAA-588 / NCTC 13252 / RB50) (Alcaligenes bronchisepticus).